The sequence spans 776 residues: Protein translocase subunit SecA 2 (776 aa).

ATP-binding positions include glutamine 80, 98–102 (GEGKT), and aspartate 486.

Belongs to the SecA family. As to quaternary structure, monomer and homodimer. Part of the essential Sec protein translocation apparatus which comprises SecA, SecYEG and auxiliary proteins SecDF. Other proteins may also be involved.

The protein localises to the cell membrane. It is found in the cytoplasm. The catalysed reaction is ATP + H2O + cellular proteinSide 1 = ADP + phosphate + cellular proteinSide 2.. Functionally, part of the Sec protein translocase complex. Interacts with the SecYEG preprotein conducting channel. Has a central role in coupling the hydrolysis of ATP to the transfer of proteins into and across the cell membrane, serving as an ATP-driven molecular motor driving the stepwise translocation of polypeptide chains across the membrane. In Listeria innocua serovar 6a (strain ATCC BAA-680 / CLIP 11262), this protein is Protein translocase subunit SecA 2.